The chain runs to 304 residues: tRNA pseudouridine synthase B (304 aa).

Asp-38 functions as the Nucleophile in the catalytic mechanism.

Belongs to the pseudouridine synthase TruB family. Type 1 subfamily.

The enzyme catalyses uridine(55) in tRNA = pseudouridine(55) in tRNA. Functionally, responsible for synthesis of pseudouridine from uracil-55 in the psi GC loop of transfer RNAs. The protein is tRNA pseudouridine synthase B of Listeria innocua serovar 6a (strain ATCC BAA-680 / CLIP 11262).